The sequence spans 322 residues: Arginase (322 aa).

Mn(2+) is bound by residues histidine 113, aspartate 141, histidine 143, and aspartate 145. Substrate contacts are provided by residues 143–147, 154–156, and aspartate 200; these read HADIN and SGN. Aspartate 247 and aspartate 249 together coordinate Mn(2+). 2 residues coordinate substrate: threonine 261 and glutamate 292.

The protein belongs to the arginase family. In terms of assembly, homotrimer. It depends on Mn(2+) as a cofactor.

The catalysed reaction is L-arginine + H2O = urea + L-ornithine. Its pathway is nitrogen metabolism; urea cycle; L-ornithine and urea from L-arginine: step 1/1. The chain is Arginase (ARG) from Coccidioides posadasii (strain C735) (Valley fever fungus).